We begin with the raw amino-acid sequence, 171 residues long: Putative phosphoesterase ABC1741 (171 aa).

The active-site Proton donor is H34. 2 consecutive short sequence motifs (HXTX) follow at residues 34 to 37 (HITL) and 116 to 119 (HITI). The Proton acceptor role is filled by H116.

This sequence belongs to the 2H phosphoesterase superfamily. YjcG family.

The sequence is that of Putative phosphoesterase ABC1741 from Shouchella clausii (strain KSM-K16) (Alkalihalobacillus clausii).